Reading from the N-terminus, the 292-residue chain is 4-hydroxy-tetrahydrodipicolinate synthase (292 aa).

Threonine 45 is a pyruvate binding site. Tyrosine 133 serves as the catalytic Proton donor/acceptor. Lysine 161 (schiff-base intermediate with substrate) is an active-site residue. Isoleucine 203 is a binding site for pyruvate.

The protein belongs to the DapA family. Homodimer.

Its subcellular location is the cytoplasm. The catalysed reaction is L-aspartate 4-semialdehyde + pyruvate = (2S,4S)-4-hydroxy-2,3,4,5-tetrahydrodipicolinate + H2O + H(+). Its pathway is amino-acid biosynthesis; L-lysine biosynthesis via DAP pathway; (S)-tetrahydrodipicolinate from L-aspartate: step 3/4. Its function is as follows. Catalyzes the condensation of (S)-aspartate-beta-semialdehyde [(S)-ASA] and pyruvate to 4-hydroxy-tetrahydrodipicolinate (HTPA). This Ectopseudomonas mendocina (strain ymp) (Pseudomonas mendocina) protein is 4-hydroxy-tetrahydrodipicolinate synthase.